An 87-amino-acid chain; its full sequence is Glutaredoxin (87 aa).

A Glutaredoxin domain is found at 1–87 (MFVVIFGRPG…YAKENLGLFD (87 aa)). Cysteine 11 and cysteine 14 are joined by a disulfide.

Belongs to the glutaredoxin family. As to quaternary structure, monomer.

It localises to the cytoplasm. In terms of biological role, has a glutathione-disulfide oxidoreductase activity in the presence of NADPH and glutathione reductase. Reduces low molecular weight disulfides and proteins. The chain is Glutaredoxin (grx) from Vibrio cholerae serotype O1 (strain ATCC 39315 / El Tor Inaba N16961).